Here is an 82-residue protein sequence, read N- to C-terminus: Putative membrane protein insertion efficiency factor (82 aa).

The protein belongs to the UPF0161 family.

It localises to the cell inner membrane. In terms of biological role, could be involved in insertion of integral membrane proteins into the membrane. The sequence is that of Putative membrane protein insertion efficiency factor from Rickettsia felis (strain ATCC VR-1525 / URRWXCal2) (Rickettsia azadi).